Here is a 159-residue protein sequence, read N- to C-terminus: 4-deoxy-4-sulfo-D-erythrose isomerase (159 aa).

Cys-66 functions as the Proton acceptor in the catalytic mechanism.

Belongs to the LacAB/RpiB family.

It catalyses the reaction 4-deoxy-4-sulfo-D-erythrose = 4-deoxy-4-sulfo-D-erythrulose. In terms of biological role, part of the sulfo-TK pathway, a D-sulfoquinovose degradation pathway that produces 2-hydroxyethane-1-sulfonate (isethionate). Catalyzes the isomerization of 4-deoxy-4-sulfo-D-erythrose (SE) to 4-deoxy-4-sulfo-D-erythrulose (SEu). The polypeptide is 4-deoxy-4-sulfo-D-erythrose isomerase (Clostridium sp. (strain MSTE9)).